The chain runs to 275 residues: Small ribosomal subunit protein uS3 (275 aa).

Positions 38 to 106 constitute a KH type-2 domain; it reads IRKLLATGLE…QVQLNILEVK (69 aa). Residues 215 to 275 form a disordered region; it reads AAAAPASDRP…AEAPAESTES (61 aa). The segment covering 237–275 has biased composition (low complexity); the sequence is SGSAGTTATSTEAGRAATSDAPAAGTAAAAEAPAESTES.

This sequence belongs to the universal ribosomal protein uS3 family. Part of the 30S ribosomal subunit. Forms a tight complex with proteins S10 and S14.

Binds the lower part of the 30S subunit head. Binds mRNA in the 70S ribosome, positioning it for translation. This chain is Small ribosomal subunit protein uS3, found in Mycolicibacterium smegmatis (strain ATCC 700084 / mc(2)155) (Mycobacterium smegmatis).